Consider the following 74-residue polypeptide: U3-agatoxin-Ao1h (74 aa).

The first 20 residues, 1–20, serve as a signal peptide directing secretion; it reads MRAIISLLLISTMVFGVIEA. Positions 21–34 are excised as a propeptide; the sequence is VSVQKSLKIFEGER. 4 disulfide bridges follow: cysteine 37-cysteine 53, cysteine 44-cysteine 58, cysteine 52-cysteine 68, and cysteine 60-cysteine 66. Residue asparagine 72 is modified to Asparagine amide.

This sequence belongs to the neurotoxin 07 (Beta/delta-agtx) family. 03 (aga-4) subfamily. Aga sub-subfamily. Expressed by the venom gland.

Its subcellular location is the secreted. Its function is as follows. Insecticidal neurotoxin that induces an irreversible spastic paralysis when injected into insects. Modifies presynaptic voltage-gated sodium channels (Nav), causing them to open at the normal resting potential of the nerve. This leads to spontaneous release of neurotransmitter and repetitive action potentials in motor neurons. This is U3-agatoxin-Ao1h from Agelena orientalis (Funnel-web spider).